A 619-amino-acid chain; its full sequence is Dihydroxy-acid dehydratase (619 aa).

Aspartate 80 is a binding site for Mg(2+). A [2Fe-2S] cluster-binding site is contributed by cysteine 121. Mg(2+) contacts are provided by aspartate 122 and lysine 123. Residue lysine 123 is modified to N6-carboxylysine. Cysteine 196 lines the [2Fe-2S] cluster pocket. Glutamate 492 contacts Mg(2+). Serine 518 serves as the catalytic Proton acceptor.

This sequence belongs to the IlvD/Edd family. Homodimer. [2Fe-2S] cluster is required as a cofactor. Requires Mg(2+) as cofactor.

It carries out the reaction (2R)-2,3-dihydroxy-3-methylbutanoate = 3-methyl-2-oxobutanoate + H2O. The catalysed reaction is (2R,3R)-2,3-dihydroxy-3-methylpentanoate = (S)-3-methyl-2-oxopentanoate + H2O. It functions in the pathway amino-acid biosynthesis; L-isoleucine biosynthesis; L-isoleucine from 2-oxobutanoate: step 3/4. The protein operates within amino-acid biosynthesis; L-valine biosynthesis; L-valine from pyruvate: step 3/4. Functions in the biosynthesis of branched-chain amino acids. Catalyzes the dehydration of (2R,3R)-2,3-dihydroxy-3-methylpentanoate (2,3-dihydroxy-3-methylvalerate) into 2-oxo-3-methylpentanoate (2-oxo-3-methylvalerate) and of (2R)-2,3-dihydroxy-3-methylbutanoate (2,3-dihydroxyisovalerate) into 2-oxo-3-methylbutanoate (2-oxoisovalerate), the penultimate precursor to L-isoleucine and L-valine, respectively. The protein is Dihydroxy-acid dehydratase of Bifidobacterium adolescentis (strain ATCC 15703 / DSM 20083 / NCTC 11814 / E194a).